A 420-amino-acid polypeptide reads, in one-letter code: Glucose-1-phosphate adenylyltransferase (420 aa).

Alpha-D-glucose 1-phosphate contacts are provided by residues Tyr107, Gly172, 187-188 (EK), and Ser205.

It belongs to the bacterial/plant glucose-1-phosphate adenylyltransferase family. As to quaternary structure, homotetramer.

The catalysed reaction is alpha-D-glucose 1-phosphate + ATP + H(+) = ADP-alpha-D-glucose + diphosphate. It functions in the pathway glycan biosynthesis; glycogen biosynthesis. In terms of biological role, involved in the biosynthesis of ADP-glucose, a building block required for the elongation reactions to produce glycogen. Catalyzes the reaction between ATP and alpha-D-glucose 1-phosphate (G1P) to produce pyrophosphate and ADP-Glc. The polypeptide is Glucose-1-phosphate adenylyltransferase (Sinorhizobium fredii (strain NBRC 101917 / NGR234)).